We begin with the raw amino-acid sequence, 1198 residues long: DNA polymerase II large subunit (1198 aa).

Disordered stretches follow at residues 281–332 and 534–553; these read YKTG…PQKK and HWAE…AAES. Residues 286–319 are compositionally biased toward acidic residues; the sequence is DTDEADADSDDGTDEDAADDSDIDDSSAGDEEAD.

It belongs to the archaeal DNA polymerase II family. Heterodimer of a large subunit and a small subunit.

It carries out the reaction DNA(n) + a 2'-deoxyribonucleoside 5'-triphosphate = DNA(n+1) + diphosphate. The catalysed reaction is Exonucleolytic cleavage in the 3'- to 5'-direction to yield nucleoside 5'-phosphates.. Possesses two activities: a DNA synthesis (polymerase) and an exonucleolytic activity that degrades single-stranded DNA in the 3'- to 5'-direction. Has a template-primer preference which is characteristic of a replicative DNA polymerase. The protein is DNA polymerase II large subunit of Natronomonas pharaonis (strain ATCC 35678 / DSM 2160 / CIP 103997 / JCM 8858 / NBRC 14720 / NCIMB 2260 / Gabara) (Halobacterium pharaonis).